The following is a 204-amino-acid chain: Urease accessory protein UreG (204 aa).

12-19 (GPVGSGKT) provides a ligand contact to GTP.

The protein belongs to the SIMIBI class G3E GTPase family. UreG subfamily. As to quaternary structure, homodimer. UreD, UreF and UreG form a complex that acts as a GTP-hydrolysis-dependent molecular chaperone, activating the urease apoprotein by helping to assemble the nickel containing metallocenter of UreC. The UreE protein probably delivers the nickel.

The protein resides in the cytoplasm. In terms of biological role, facilitates the functional incorporation of the urease nickel metallocenter. This process requires GTP hydrolysis, probably effectuated by UreG. This Ectopseudomonas mendocina (strain ymp) (Pseudomonas mendocina) protein is Urease accessory protein UreG.